The chain runs to 4226 residues: MSDSKKHYNESNVRYKVKYSGKIFGNNMKKLNENNNHDFTTAEAAWMEKKKKLYKDTNNQPLWDFRKIQINPTETDELISFPSNKICSKNYGKYSFIFKGLYEQFLRLPNIWFLLISLLEFIPQYQNLSNYMYYSKHSSFFLLLFFICVSIIKNIYEDSRRSNIDYQINNRLCHMLDGPNSQLKAVRWMELSVGSIIRLIENEQVPADILLLSCNNSEGVVYIETSLLNGETNLNKKYCVNETRNETSIYAISNIRGRIVCEKPNSNMESFNGSLKLDAHPRATSLSINNVIFKGSHIKNTEYIFGVILYTGNDTKIMKNISNNKHKLGYVNKELNSYTIIGLIFTFICVFISVLFKWTEDDKFRNGSHFFLITVKDNICESIVKYTLLYSNIIPISILISVDLISILQSILIENDNHISTFENYETSEPSTIDDMDNELGDFKMDKSHTFFKKYTYFLNNRSKNFTNNRYSSTNTERASDFRKSFFGTFDKLKTIKRYFYSIKSKIKSISQSNTLYNKSSAGGSIIRSDKNKQTTFSKSFIDIFQRTNNNEHSQTLDNNNNNDNNNNNNICKEKYQNVNNSKNVYVSEDSSNNKYKQNDYLQKSQEQNEIHSINNNNYNNKNDNNLQTEFSNHNFRINAYKTNRTTKDDTYNNKHISLNSRSKSNQKGILINSNEINRKKKKNLLQKIFPFFKKKRTNISEDLSKYVFRRSKQLNINHNNSEKYNLNDYDEYGWGLCLNSNMHGDLGNVDFIFTDKTGTLTNNNMTFNMCSIAGKTYGSKCKNKKKIYNNPKSNNDNKLNSYDKNIFKNKFSSEASIKKISFVRDFSNNVSSKNDLTLDDPTELISDEGNNYLRDKYEHTSDKKNDTNKNRDGANNSNNNNNKDVSNNKNKNNNNYNYNSNNDYIKQNGECNIYNNQNNTNNTHNNNIYYDEYNNTNEGNMKNTNVNKDTNSKCNKKDFIINTSDIINNNNNNNNDQKTNNLKYKSSSSWNSKAKKSSYINLNSYNKYQSFQNSSMLSSSLSSTCSSETEDENGSQLMYYSSSNYDNLDINNDMDSTKTYSHYTEQNYYNSVKDDKDINSEHQRYQQKKTNKQTKNIQQNQCDQWEDNRYTQESIKNQYFFDRNYQTFLMKQNFPRPKSFRLNMNSSSVKGRCDFNDTKIYNDLNSQSWRGYYIDEFFKCMTLCHAVTPFIQFDYIRNKHLTYTNSRSSKGISNNMDRYNINPTTTTTNNNNNNNNINNINNINNNNNNNNNNNNNKQFSCDYMKNRNDIIFETSTDYYANQDNAKRKREKTLFDNVSHCGEIQEYRDNKKYRMKRSQTCSNNRKIFSNQRTLYDYRNMNNNLKNKNSYLRNKLKSKIFLDKSYRKRKKSSGTYKGSDICKGIEKKETRRWKRFLHMKGSNNRNIFSRIKDFKSNSIIYNNQDKTNDYKNGYSNNINNNNSNNYTNEKINRSFNKRHSAVSFKQMSKEKLIPINNVLSNRCDVESYPNEELSFSKKKKKNSEIVSFASGKSDIGFEERTDAGIAGKNMELSYNELEKYKYVKHIDSNNKYINNNNNSIHMSHMSSNNNTFESHIYFDAIKYQSSSLDEECLIYSSSFLGYRLVLRNKNTMCIEIDGSFNKWTIIGVNEFTNRRGKMSIVVKPDSMESGSILYVKGSDSSILSLLNLKYSKFLDKKYSRKRRNKNIQKYKQKREEYNELKSKDINIEEFQKSKSLSLKNFKNNTPKVLFGECTLDNNNNNINKNYKYDKNDKHNNNNNNNNNNSNYSYNYLHDSNNLDAMQNQKYSYAYEDKEDYYYTNNGECNKYKERYRRLEKQLRKFSVKGLRSMIFAFRYLSEEETIKYKRMYDDACSSIYNKEQRLEKVAEEFERDLIYLGITGVKNGLQEKVPKTIDILNQSGIRIWMLTGDNVEYSLHVSFLCKFLNKHTKIFHAALENSNAKKLKREGMALYELFQLEKEEKKPYENLCLLVNGRNLQTFLNYTDLQTHFLNMACTCDVVIACRITAKQKAFLVQLIKNRLYPTPNTLAIGDGANDIAMIQEANIGVSIMTSDCIISAGYSDYCIKKFCYLRKLLFIYGSKHLYTISIILYWNFFKNILLILPIFFYQAYASWSCVKIYPELLYTFFSIFWVFIPIIYYMFLQHNLNYDILYNIPLFYALSRRRYNMNCFKFLPWIFEAIFYSMIIYFFAYAALKENSHLNNGEVITINTFGNICFIGCLLISILRLFLEGSLWSPSILITCFGCFLFVFFPSLLFICFAYLSNEYIREVFRQTFLWAPLYVLLILWFSTCIISYIFINFTKSILFPNIYNVVNHWLFEQYQEKHNKNKYIFSLSGKNKFLKLRKLGKKIKFKFKRNYSKKYDTNVIREHPLLHHTFKSEQDQNKCNEQFSKDPFISNSLLKSKNCKFKKDSSYSKSNIHVDEEQTYKGLKVVLSEQVVHAKENLVSFKNEKKNKNNKNTSMNVNDNIIIKNNNINIKNNDNNNDDNDNDNNNNNNNNDNYNNNDHNKKEFKQKHIQNNYENLFNHTQVENNLIKENLSIRNDNNRRDNKNETDYIKQSDEDYEMNPSITSLRKRECINDSKYIDNKSYDNKISNNHEEKDGFKSDDRSLINSNMMDYKNEFTENDTTYSFNDSHMFYDFPSNSKTTKDYKVINSRIDDSIMADMKNCLNPLKNTFLVDLLPPGKRFRINEDHIYFKNNERMENIPEALDVNKKYYHIIQNKAEYYDNDSLSEFSYTSSNSSINNKKKNENTQKEIVKVSHLINRFTLAFKDMQLESGFQIHKKNKFYKTFTPWYRFIFLLLGVFFLYVWKLESSLSQLWNMPSDASTDVFILFLSLLLELVLLAATVTTFFSNIFIENFNKIISAVVILIITYHVVSYSVTHIDGVFQAVLFPLYTFVILRLPFVNAVLCNIIFLGLFIIRFNGDHFLDKKGLAHYIPLFIGVDVFVGFVGYRLEYNQRKNFLLEYSVESSRRKQREILNTMLPPFVVDEMIYSELNEEGIPISLKAEDISTVTIIFCDIYDFQNIVASIEPTRLVEVLDRLFLCFDKCTEQFNCTKIETVFETYLAACGLVKREKDEDELENNKYSNNNKNNNNNYYYNRKKKKKKNNNNNNNNNNNNNNNNNNNNNLNNNNNNNNVNTSDDDGDFFEEDDANNHQIYNQMKGQEDAHDSIDFALSILHVSSHIKYEKSKMMLKKNDSFEDANDDTHNVNDSFNNDKAENDNTNTDNNKPTRIRVKVGIHSGRIIAGVVGSKKPQYALFGDTVNTASRMKTTGKPDYIHISEATYNLVKDDKTLIYEKKETEIKGKGIMTTYLLTSVIGLNYPFLGEHVEKKGHFISELYEDDLSNNLNYDKTQNILGYYSNKINQNNDSNINEGIINNNMNTFNTIDGDTSNYYVNLKDLSLNDLPNEYIKDVNTHYCEIIKLRNLKIGTAVGYQLKQKDFYNMTFLNNGLNNDTATNFNQYIESHKDFDDIKDLRIGMNKLSISDSLYYLNENVIRNEPINEYKNKIKINSVNTNKKSYEDAHLNAGNIIYTNNEYPNGQNIEEDDDLLLTNHYNKTNVNNNNNNNIYDVSKELIEHNEEDYKNILMCSKRCKNCNETYCTPNDCNNNDHVYHVMYHRKLSNIKKNYLKNIRKDANIKKDIEKEELNKIHSNKKSFNFFYLFSYIFKIFPFIGKINKEEKKNKSYKKGEQDKSSKRIIALNSEWIFLKFSDKNLEAKYRAHFYSNKSNINSIEQALIIFLVTFVMQTLISSTVSIVFIDHKRATQTLHINYFAYWSVRSVYTFFGFVLWLLFHYRTRPEVSSLLNIKWMIFFLNLLFISAACVFSIAYLWAISETDQTTSYTIWMTNDTIEFFFYLVILHHNTGMLFQTCILVDLLFITMSLTFIATSVVKTITTDSTVLLIPWYVAFNLISTYCKESIDRRTFYANESAKKTENRATELLNDMLPKHVLEEFQQDKLKLAYTHDRLTFLFADICGFTSWANGVDASEVLTLLQKLFAKFDNDSTKYGLYKLCTIGDAYVAISEPVTEDNKDYDPVDGTERVLEMAYSMIRIIKEIREKLYIPNLNMRIGLHYGSCVGGVIGSGRLRYDLWGIDVLTGNLMESNGIPGKINVSETLKNFLLQQFKNRFIFKPHTTIRVIYKDVKCFIITDKKEVESSNHSKLLQNKNYLLNKKFSTQNYLVKNIFAKKKHSSISSSKNIHSYDEKKKKKNDLFYINVNDRQSNL.

Over 1–104 (MSDSKKHYNE…SFIFKGLYEQ (104 aa)) the chain is Cytoplasmic. The chain crosses the membrane as a helical span at residues 105 to 125 (FLRLPNIWFLLISLLEFIPQY). Residues 126-131 (QNLSNY) lie on the Extracellular side of the membrane. N-linked (GlcNAc...) asparagine glycosylation occurs at Asn127. A helical membrane pass occupies residues 132–152 (MYYSKHSSFFLLLFFICVSII). Residues 153–337 (KNIYEDSRRS…LGYVNKELNS (185 aa)) lie on the Cytoplasmic side of the membrane. A helical membrane pass occupies residues 338–358 (YTIIGLIFTFICVFISVLFKW). At 359–392 (TEDDKFRNGSHFFLITVKDNICESIVKYTLLYSN) the chain is on the extracellular side. A glycan (N-linked (GlcNAc...) asparagine) is linked at Asn366. Residues 393–413 (IIPISILISVDLISILQSILI) form a helical membrane-spanning segment. Residues 414 to 2083 (ENDNHISTFE…FIYGSKHLYT (1670 aa)) lie on the Cytoplasmic side of the membrane. 4 disordered regions span residues 552-572 (EHSQTLDNNNNNDNNNNNNIC), 832-904 (SSKN…SNND), 968-989 (INNNNNNNNDQKTNNLKYKSSS), and 1740-1765 (NINKNYKYDKNDKHNNNNNNNNNNSN). Residues 558-570 (DNNNNNDNNNNNN) are compositionally biased toward low complexity. Positions 838-847 (TLDDPTELIS) are enriched in acidic residues. Basic and acidic residues predominate over residues 854–873 (LRDKYEHTSDKKNDTNKNRD). Low complexity predominate over residues 874-904 (GANNSNNNNNKDVSNNKNKNNNNYNYNSNND). Basic and acidic residues predominate over residues 1745–1754 (YKYDKNDKHN). Positions 1755–1765 (NNNNNNNNNSN) are enriched in low complexity. Residues 2084 to 2104 (ISIILYWNFFKNILLILPIFF) traverse the membrane as a helical segment. Residues 2105-2119 (YQAYASWSCVKIYPE) are Extracellular-facing. A helical transmembrane segment spans residues 2120-2140 (LLYTFFSIFWVFIPIIYYMFL). Residues 2141-2169 (QHNLNYDILYNIPLFYALSRRRYNMNCFK) lie on the Cytoplasmic side of the membrane. A helical transmembrane segment spans residues 2170 to 2190 (FLPWIFEAIFYSMIIYFFAYA). Residues 2191–2202 (ALKENSHLNNGE) lie on the Extracellular side of the membrane. A helical transmembrane segment spans residues 2203–2223 (VITINTFGNICFIGCLLISIL). Over 2224-2235 (RLFLEGSLWSPS) the chain is Cytoplasmic. The chain crosses the membrane as a helical span at residues 2236–2256 (ILITCFGCFLFVFFPSLLFIC). At 2257 to 2275 (FAYLSNEYIREVFRQTFLW) the chain is on the extracellular side. Residues 2276 to 2296 (APLYVLLILWFSTCIISYIFI) traverse the membrane as a helical segment. Over 2297 to 2787 (NFTKSILFPN…QIHKKNKFYK (491 aa)) the chain is Cytoplasmic. Positions 2477–2505 (NNDNNNDDNDNDNNNNNNNNDNYNNNDHN) are disordered. Low complexity predominate over residues 2488–2502 (DNNNNNNNNDNYNNN). A helical membrane pass occupies residues 2788–2808 (TFTPWYRFIFLLLGVFFLYVW). The Extracellular segment spans residues 2809–2828 (KLESSLSQLWNMPSDASTDV). Residues 2829–2849 (FILFLSLLLELVLLAATVTTF) traverse the membrane as a helical segment. Residues 2850 to 2860 (FSNIFIENFNK) lie on the Cytoplasmic side of the membrane. Residues 2861-2881 (IISAVVILIITYHVVSYSVTH) form a helical membrane-spanning segment. Residues 2882-2900 (IDGVFQAVLFPLYTFVILR) lie on the Extracellular side of the membrane. The helical transmembrane segment at 2901–2921 (LPFVNAVLCNIIFLGLFIIRF) threads the bilayer. Topologically, residues 2922 to 2930 (NGDHFLDKK) are cytoplasmic. A helical transmembrane segment spans residues 2931–2951 (GLAHYIPLFIGVDVFVGFVGY). Residues 2952-3008 (RLEYNQRKNFLLEYSVESSRRKQREILNTMLPPFVVDEMIYSELNEEGIPISLKAED) are Extracellular-facing. Residues 3009-3029 (ISTVTIIFCDIYDFQNIVASI) traverse the membrane as a helical segment. The 258-residue stretch at 3013 to 3270 (TIIFCDIYDF…DTVNTASRMK (258 aa)) folds into the Guanylate cyclase 1 domain. At 3030–3738 (EPTRLVEVLD…SNINSIEQAL (709 aa)) the chain is on the cytoplasmic side. Disordered stretches follow at residues 3077 to 3150 (EDEL…FEED) and 3201 to 3230 (DANDDTHNVNDSFNNDKAENDNTNTDNNKP). 2 stretches are compositionally biased toward low complexity: residues 3083 to 3098 (NKYSNNNKNNNNNYYY) and 3108 to 3138 (NNNNNNNNNNNNNNNNNNNNLNNNNNNNNVN). Residues 3140 to 3150 (SDDDGDFFEED) show a composition bias toward acidic residues. Positions 3201–3220 (DANDDTHNVNDSFNNDKAEN) are enriched in basic and acidic residues. Residues 3739 to 3759 (IIFLVTFVMQTLISSTVSIVF) form a helical membrane-spanning segment. Over 3760–3773 (IDHKRATQTLHINY) the chain is Extracellular. Residues 3774-3794 (FAYWSVRSVYTFFGFVLWLLF) form a helical membrane-spanning segment. Over 3795-3811 (HYRTRPEVSSLLNIKWM) the chain is Cytoplasmic. Residues 3812-3832 (IFFLNLLFISAACVFSIAYLW) traverse the membrane as a helical segment. At 3833-3840 (AISETDQT) the chain is on the extracellular side. Residues 3841 to 3861 (TSYTIWMTNDTIEFFFYLVIL) traverse the membrane as a helical segment. Topologically, residues 3862–3871 (HHNTGMLFQT) are cytoplasmic. The helical transmembrane segment at 3872-3892 (CILVDLLFITMSLTFIATSVV) threads the bilayer. Position 3893 (Lys3893) is a topological domain, extracellular. A helical transmembrane segment spans residues 3894 to 3914 (TITTDSTVLLIPWYVAFNLIS). Residues 3915-4226 (TYCKESIDRR…INVNDRQSNL (312 aa)) are Cytoplasmic-facing. A Guanylate cyclase 2 domain is found at 3970 to 4104 (TFLFADICGF…IDVLTGNLME (135 aa)). Residues Asp3975, Ile3976, and Asp4019 each coordinate Mg(2+).

This sequence in the N-terminal section; belongs to the cation transport ATPase (P-type) (TC 3.A.3) family. Type IV subfamily. The protein in the C-terminal section; belongs to the adenylyl cyclase class-4/guanylyl cyclase family. Mg(2+) serves as cofactor. Mn(2+) is required as a cofactor.

The protein localises to the cell membrane. Its subcellular location is the cytoplasmic vesicle membrane. The enzyme catalyses GTP = 3',5'-cyclic GMP + diphosphate. In terms of biological role, catalyzes the synthesis of the second messenger cGMP from GTP. In asexual blood stage schizonts, required for cGMP production which is essential for PKG activation, PKG-dependent Ca(2+) release, and ultimately merozoite egress from host erythrocytes. In Plasmodium falciparum (isolate 3D7), this protein is Guanylate cyclase alpha.